The sequence spans 340 residues: HTH-type transcriptional repressor PurR (340 aa).

Positions 2–56 constitute an HTH lacI-type domain; that stretch reads ATIKDVAKLVGVSTTTVSHVINKTRFVAEDTTKAVWEAIASLNYSPSAVARSLKV. Residues 4–23 constitute a DNA-binding region (H-T-H motif); that stretch reads IKDVAKLVGVSTTTVSHVIN. A DNA-binding region spans residues 48–56; that stretch reads SAVARSLKV. 5 residues coordinate hypoxanthine: tyrosine 73, lysine 188, threonine 190, phenylalanine 219, and aspartate 273.

Homodimer.

Its pathway is purine metabolism; purine nucleotide biosynthesis [regulation]. Functionally, is the main repressor of the genes involved in the de novo synthesis of purine nucleotides, regulating purB, purC, purEK, purF, purHD, purL, purMN and guaBA expression. PurR is allosterically activated to bind its cognate DNA by binding the purine corepressors, hypoxanthine or guanine, thereby effecting transcription repression. The protein is HTH-type transcriptional repressor PurR of Glaesserella parasuis serovar 5 (strain SH0165) (Haemophilus parasuis).